A 495-amino-acid chain; its full sequence is UDP-N-acetylmuramate--L-alanine ligase (495 aa).

120 to 126 contributes to the ATP binding site; it reads GSHGKTT.

This sequence belongs to the MurCDEF family.

Its subcellular location is the cytoplasm. The enzyme catalyses UDP-N-acetyl-alpha-D-muramate + L-alanine + ATP = UDP-N-acetyl-alpha-D-muramoyl-L-alanine + ADP + phosphate + H(+). It functions in the pathway cell wall biogenesis; peptidoglycan biosynthesis. Cell wall formation. The protein is UDP-N-acetylmuramate--L-alanine ligase of Rickettsia prowazekii (strain Madrid E).